We begin with the raw amino-acid sequence, 201 residues long: Probable chemoreceptor glutamine deamidase CheD 1 (201 aa).

Belongs to the CheD family.

It catalyses the reaction L-glutaminyl-[protein] + H2O = L-glutamyl-[protein] + NH4(+). Its function is as follows. Probably deamidates glutamine residues to glutamate on methyl-accepting chemotaxis receptors (MCPs), playing an important role in chemotaxis. The polypeptide is Probable chemoreceptor glutamine deamidase CheD 1 (Geobacter sulfurreducens (strain ATCC 51573 / DSM 12127 / PCA)).